The following is a 143-amino-acid chain: Transcriptional regulator MraZ (143 aa).

SpoVT-AbrB domains are found at residues 5–47 (TYTP…PRDE) and 76–119 (TDEQ…DAQA).

This sequence belongs to the MraZ family. As to quaternary structure, forms oligomers.

The protein localises to the cytoplasm. The protein resides in the nucleoid. The sequence is that of Transcriptional regulator MraZ from Mycolicibacterium smegmatis (strain ATCC 700084 / mc(2)155) (Mycobacterium smegmatis).